Here is a 241-residue protein sequence, read N- to C-terminus: Pyridoxine 5'-phosphate synthase (241 aa).

Asparagine 7 is a binding site for 3-amino-2-oxopropyl phosphate. 9 to 10 (DH) contributes to the 1-deoxy-D-xylulose 5-phosphate binding site. Arginine 18 is a 3-amino-2-oxopropyl phosphate binding site. The Proton acceptor role is filled by histidine 43. 2 residues coordinate 1-deoxy-D-xylulose 5-phosphate: arginine 45 and histidine 50. The active-site Proton acceptor is the glutamate 70. Residue threonine 100 participates in 1-deoxy-D-xylulose 5-phosphate binding. The active-site Proton donor is the histidine 191. Residues glycine 192 and 213–214 (GH) each bind 3-amino-2-oxopropyl phosphate.

The protein belongs to the PNP synthase family. In terms of assembly, homooctamer; tetramer of dimers.

Its subcellular location is the cytoplasm. It carries out the reaction 3-amino-2-oxopropyl phosphate + 1-deoxy-D-xylulose 5-phosphate = pyridoxine 5'-phosphate + phosphate + 2 H2O + H(+). The protein operates within cofactor biosynthesis; pyridoxine 5'-phosphate biosynthesis; pyridoxine 5'-phosphate from D-erythrose 4-phosphate: step 5/5. In terms of biological role, catalyzes the complicated ring closure reaction between the two acyclic compounds 1-deoxy-D-xylulose-5-phosphate (DXP) and 3-amino-2-oxopropyl phosphate (1-amino-acetone-3-phosphate or AAP) to form pyridoxine 5'-phosphate (PNP) and inorganic phosphate. The sequence is that of Pyridoxine 5'-phosphate synthase from Acidithiobacillus ferrooxidans (strain ATCC 23270 / DSM 14882 / CIP 104768 / NCIMB 8455) (Ferrobacillus ferrooxidans (strain ATCC 23270)).